Here is a 676-residue protein sequence, read N- to C-terminus: Beta-galactosidase BgaP (676 aa).

Arginine 112 contacts substrate. Cysteine 116 is a Zn(2+) binding site. Substrate is bound at residue asparagine 150. Catalysis depends on glutamate 151, which acts as the Proton donor. Positions 156, 158, and 161 each coordinate Zn(2+). Catalysis depends on glutamate 308, which acts as the Nucleophile. Substrate-binding positions include tryptophan 316 and 356–359 (EKYH).

The protein belongs to the glycosyl hydrolase 42 family. Homodimer.

The enzyme catalyses Hydrolysis of terminal non-reducing beta-D-galactose residues in beta-D-galactosides.. Its activity is regulated as follows. No activity lost during treatment with 100 mM EDTA after 2 hours, and the addition of 1 mM MgCl(2), 1 mM CaCl(2) or 1 mM MnCl(2) has no effect. However, the enzyme activity is inhibited by Zn(2+), Cu(2+), Ni(2+) and Co(2+) to different extents. Addition of Na(+) or K(+) slightly stimulates the enzyme activity at low concentrations and the optimal concentration is 250 mM. A further increase of their concentration of ions above the optimum value results in a decrease in enzyme activity. The enzyme is still active even in the presence of Na(+) or K(+) at a concentration up to 5 M. In terms of biological role, hydrolyzes lactose, o-nitrophenyl-beta-D-galactopyranoside (ONPG), p-nitrophenyl-beta-D-galactopyranoside (PNPG), 5-bromo-4-chloro-3-indolyl-beta-D-galactopyranoside (X-gal), o-nitrophenyl-beta-D-fucopyranoside, p-nitrophenyl-beta-D-mannoside, o-nitrophenyl-beta-D-glucoside, p-nitrophenyl-beta-D-xyloside, p-nitrophenyl-beta-D-cellobioside, p-nitrophenyl-beta-D-arabinoside, p-nitrophenyl-beta-D-lactoside, p-nitrophenyl-beta-D-galacturonide, p-nitrophenyl-beta-D-glucuronide and p-nitrophenyl-alpha-D-galactoside with highest level of activity with ONPG as substrate, intermediate level of activity with PNPG and lower levels of activity with all other chromogenic nitrophenyl analogs. Able to hydrolyze 34% of milk lactose after 60 minutes at 5 degrees Celsius. This chain is Beta-galactosidase BgaP, found in Planococcus sp. (strain L4).